The sequence spans 144 residues: Large ribosomal subunit protein uL16 (144 aa).

Belongs to the universal ribosomal protein uL16 family. As to quaternary structure, part of the 50S ribosomal subunit.

Binds 23S rRNA and is also seen to make contacts with the A and possibly P site tRNAs. The chain is Large ribosomal subunit protein uL16 from Thermoanaerobacter pseudethanolicus (strain ATCC 33223 / 39E) (Clostridium thermohydrosulfuricum).